We begin with the raw amino-acid sequence, 511 residues long: Glucose-1-phosphate adenylyltransferase large subunit 1, chloroplastic/amyloplastic (511 aa).

A chloroplast-targeting transit peptide spans 1 to 58 (MAAMDLRVAAPASVAAAARCGTSLARPWPARAVGGGGGGGGRGRRLSVRTSVATTEAA).

This sequence belongs to the bacterial/plant glucose-1-phosphate adenylyltransferase family. As to quaternary structure, heterotetramer composed of two small and two large subunits. In terms of tissue distribution, expressed in leaves and stems.

Its subcellular location is the plastid. The protein localises to the chloroplast. It is found in the amyloplast. The catalysed reaction is alpha-D-glucose 1-phosphate + ATP + H(+) = ADP-alpha-D-glucose + diphosphate. Its pathway is glycan biosynthesis; starch biosynthesis. Activated by 3'phosphoglycerate, inhibited by orthophosphate. Allosteric regulation. In terms of biological role, involved in synthesis of starch. Catalyzes the synthesis of ADP-glucose, a molecule that serves as an activated glycosyl donor for alpha-1,4-glucan synthesis. Essential for starch synthesis in leaf chloroplasts and endosperm amyloplasts. The sequence is that of Glucose-1-phosphate adenylyltransferase large subunit 1, chloroplastic/amyloplastic from Oryza sativa subsp. japonica (Rice).